We begin with the raw amino-acid sequence, 524 residues long: 2-isopropylmalate synthase (524 aa).

The 263-residue stretch at 12–274 folds into the Pyruvate carboxyltransferase domain; the sequence is VIIFDTTLRD…WNRIESKMLT (263 aa). Mn(2+)-binding residues include D21, H209, H211, and N245. The interval 398 to 524 is regulatory domain; that stretch reads RLKSLTVIAG…QDAPAVAVAG (127 aa).

Belongs to the alpha-IPM synthase/homocitrate synthase family. LeuA type 1 subfamily. In terms of assembly, homodimer. Mn(2+) is required as a cofactor.

It is found in the cytoplasm. The enzyme catalyses 3-methyl-2-oxobutanoate + acetyl-CoA + H2O = (2S)-2-isopropylmalate + CoA + H(+). The protein operates within amino-acid biosynthesis; L-leucine biosynthesis; L-leucine from 3-methyl-2-oxobutanoate: step 1/4. Functionally, catalyzes the condensation of the acetyl group of acetyl-CoA with 3-methyl-2-oxobutanoate (2-ketoisovalerate) to form 3-carboxy-3-hydroxy-4-methylpentanoate (2-isopropylmalate). This is 2-isopropylmalate synthase from Rhodopseudomonas palustris (strain BisB5).